Reading from the N-terminus, the 422-residue chain is 26S proteasome non-ATPase regulatory subunit 11B (422 aa).

The 165-residue stretch at 228–392 folds into the PCI domain; sequence AYSYFFEAFE…DVLIIFEEPP (165 aa).

The protein belongs to the proteasome subunit S9 family. Component of the lid subcomplex of the 19S proteasome regulatory particle complex (also named PA700 complex). The 26S proteasome consists of a 20S proteasome core and two 19S regulatory subunits.

It localises to the nucleus. Its subcellular location is the cytoplasm. It is found in the cytosol. In terms of biological role, component of the lid subcomplex of the 26S proteasome, a multiprotein complex involved in the ATP-dependent degradation of ubiquitinated proteins. In the complex, psmd11b is required for proteasome assembly. In Danio rerio (Zebrafish), this protein is 26S proteasome non-ATPase regulatory subunit 11B (psmd11b).